Consider the following 351-residue polypeptide: Nicotinate-nucleotide--dimethylbenzimidazole phosphoribosyltransferase (351 aa).

The active-site Proton acceptor is the glutamate 317.

The protein belongs to the CobT family.

It carries out the reaction 5,6-dimethylbenzimidazole + nicotinate beta-D-ribonucleotide = alpha-ribazole 5'-phosphate + nicotinate + H(+). It functions in the pathway nucleoside biosynthesis; alpha-ribazole biosynthesis; alpha-ribazole from 5,6-dimethylbenzimidazole: step 1/2. Its function is as follows. Catalyzes the synthesis of alpha-ribazole-5'-phosphate from nicotinate mononucleotide (NAMN) and 5,6-dimethylbenzimidazole (DMB). This chain is Nicotinate-nucleotide--dimethylbenzimidazole phosphoribosyltransferase, found in Bradyrhizobium sp. (strain BTAi1 / ATCC BAA-1182).